A 403-amino-acid polypeptide reads, in one-letter code: Protein WVD2-like 6 (403 aa).

Disordered regions lie at residues 1–179 and 254–403; these read MDSE…ALPN and LKKI…AVEP. Over residues 25-56 the composition is skewed to polar residues; sequence GDSSNGNGGTSENLECCSTQHPMEASEGTQNE. Residues 103–118 are compositionally biased toward low complexity; sequence SVAPNVKPVKSPKSKS. At S113 the chain carries Phosphoserine. Composition is skewed to basic and acidic residues over residues 120-132, 139-153, and 162-171; these read NGRE…HGNH, GTRD…RKQV, and QYPKEDDGKP. Residues 263-273 show a composition bias toward basic residues; sequence KSPKLGRKKTN. The span at 336–348 shows a compositional bias: low complexity; that stretch reads KVAPAKAVTASTK. A compositionally biased stretch (basic and acidic residues) spans 385 to 394; it reads VNEDRNESHM.

Belongs to the TPX2 family. In terms of tissue distribution, expressed in seedlings.

The protein resides in the cytoplasm. It localises to the cytoskeleton. Functionally, microtubule-associated protein (MAP) that regulates the orientation of interphase cortical microtubules. This chain is Protein WVD2-like 6, found in Arabidopsis thaliana (Mouse-ear cress).